A 160-amino-acid chain; its full sequence is Calsequestrin-2 (160 aa).

The protein belongs to the calsequestrin family. In terms of assembly, monomer, homodimer and homooligomer. Mostly monomeric in the absence of calcium. Forms higher oligomers in a calcium-dependent manner. Dimers associate to form tetramers, that then form linear homomer chains. Interacts with ASPH and TRDN. Phosphorylation in the C-terminus, probably by CK2, moderately increases calcium buffering capacity. In terms of processing, N-glycosylated.

The protein localises to the sarcoplasmic reticulum lumen. Functionally, calsequestrin is a high-capacity, moderate affinity, calcium-binding protein and thus acts as an internal calcium store in muscle. Calcium ions are bound by clusters of acidic residues at the protein surface, especially at the interface between subunits. Can bind around 60 Ca(2+) ions. Regulates the release of lumenal Ca(2+) via the calcium release channel RYR2; this plays an important role in triggering muscle contraction. Plays a role in excitation-contraction coupling in the heart and in regulating the rate of heart beats. This Sus scrofa (Pig) protein is Calsequestrin-2 (CASQ2).